The chain runs to 386 residues: Histidine decarboxylase (386 aa).

Substrate is bound at residue His120. At Lys233 the chain carries N6-(pyridoxal phosphate)lysine.

It belongs to the group II decarboxylase family. As to quaternary structure, homotetramer. It depends on pyridoxal 5'-phosphate as a cofactor.

The enzyme catalyses L-histidine + H(+) = histamine + CO2. In Vibrio campbellii (strain ATCC BAA-1116), this protein is Histidine decarboxylase.